A 76-amino-acid chain; its full sequence is Conotoxin Lt6.1 (76 aa).

Residues 1–22 (MKLTCVLIIAVLFLMDNQLITA) form the signal peptide. Positions 23–48 (DYPRDEQVYRAVRLRDAMQKSKGSGS) are excised as a propeptide. Disulfide bonds link cysteine 49–cysteine 62, cysteine 56–cysteine 67, and cysteine 61–cysteine 75.

It belongs to the conotoxin O1 superfamily. As to expression, expressed by the venom duct.

Its subcellular location is the secreted. In Conus litteratus (Lettered cone), this protein is Conotoxin Lt6.1.